A 121-amino-acid polypeptide reads, in one-letter code: Large ribosomal subunit protein bL12 (121 aa).

Belongs to the bacterial ribosomal protein bL12 family. Homodimer. Part of the ribosomal stalk of the 50S ribosomal subunit. Forms a multimeric L10(L12)X complex, where L10 forms an elongated spine to which 2 to 4 L12 dimers bind in a sequential fashion. Binds GTP-bound translation factors.

Functionally, forms part of the ribosomal stalk which helps the ribosome interact with GTP-bound translation factors. Is thus essential for accurate translation. This chain is Large ribosomal subunit protein bL12, found in Clostridium beijerinckii (strain ATCC 51743 / NCIMB 8052) (Clostridium acetobutylicum).